Here is a 186-residue protein sequence, read N- to C-terminus: Ribosome-recycling factor (186 aa).

Belongs to the RRF family.

The protein localises to the cytoplasm. Its function is as follows. Responsible for the release of ribosomes from messenger RNA at the termination of protein biosynthesis. May increase the efficiency of translation by recycling ribosomes from one round of translation to another. The sequence is that of Ribosome-recycling factor from Brucella melitensis biotype 2 (strain ATCC 23457).